A 472-amino-acid chain; its full sequence is Protein translocase subunit SecD (472 aa).

Transmembrane regions (helical) follow at residues 8-28 (ILFT…PLSG), 300-320 (TIIN…IIFY), 325-347 (VIAD…WTGA), 353-375 (GIAG…YERI), 396-416 (VFST…VLFF), and 424-444 (GFAV…LVVS).

The protein belongs to the SecD/SecF family. SecD subfamily. In terms of assembly, forms a complex with SecF. Part of the essential Sec protein translocation apparatus which comprises SecA, SecYEG and auxiliary proteins SecDF. Other proteins may also be involved.

The protein resides in the cell inner membrane. In terms of biological role, part of the Sec protein translocase complex. Interacts with the SecYEG preprotein conducting channel. SecDF uses the proton motive force (PMF) to complete protein translocation after the ATP-dependent function of SecA. The protein is Protein translocase subunit SecD of Petrotoga mobilis (strain DSM 10674 / SJ95).